The sequence spans 255 residues: Triosephosphate isomerase (255 aa).

9–11 (NWK) serves as a coordination point for substrate. Residue H95 is the Electrophile of the active site. The Proton acceptor role is filled by E167. Substrate-binding positions include G173, S212, and 233–234 (GG).

It belongs to the triosephosphate isomerase family. In terms of assembly, homodimer.

Its subcellular location is the cytoplasm. The enzyme catalyses D-glyceraldehyde 3-phosphate = dihydroxyacetone phosphate. It participates in carbohydrate biosynthesis; gluconeogenesis. Its pathway is carbohydrate degradation; glycolysis; D-glyceraldehyde 3-phosphate from glycerone phosphate: step 1/1. Its function is as follows. Involved in the gluconeogenesis. Catalyzes stereospecifically the conversion of dihydroxyacetone phosphate (DHAP) to D-glyceraldehyde-3-phosphate (G3P). In Sodalis glossinidius (strain morsitans), this protein is Triosephosphate isomerase.